A 186-amino-acid chain; its full sequence is Ribosome-recycling factor (186 aa).

It belongs to the RRF family.

The protein localises to the cytoplasm. Functionally, responsible for the release of ribosomes from messenger RNA at the termination of protein biosynthesis. May increase the efficiency of translation by recycling ribosomes from one round of translation to another. This Allorhizobium ampelinum (strain ATCC BAA-846 / DSM 112012 / S4) (Agrobacterium vitis (strain S4)) protein is Ribosome-recycling factor.